The primary structure comprises 207 residues: Holliday junction branch migration complex subunit RuvA (207 aa).

The domain I stretch occupies residues 1 to 63 (MIDSLHGEVL…DDGIDLYAFE (63 aa)). Positions 64–142 (SDEARQMFAM…VFDSGDSASE (79 aa)) are domain II. Residues 143–154 (PQSGVGGNSEAE) form a flexible linker region. A domain III region spans residues 155–207 (VDSGVVGTVTQALVELGFPEKQAEKTATSAAAEGGSVSEILKRALRSMSSERN).

This sequence belongs to the RuvA family. In terms of assembly, homotetramer. Forms an RuvA(8)-RuvB(12)-Holliday junction (HJ) complex. HJ DNA is sandwiched between 2 RuvA tetramers; dsDNA enters through RuvA and exits via RuvB. An RuvB hexamer assembles on each DNA strand where it exits the tetramer. Each RuvB hexamer is contacted by two RuvA subunits (via domain III) on 2 adjacent RuvB subunits; this complex drives branch migration. In the full resolvosome a probable DNA-RuvA(4)-RuvB(12)-RuvC(2) complex forms which resolves the HJ.

It is found in the cytoplasm. Functionally, the RuvA-RuvB-RuvC complex processes Holliday junction (HJ) DNA during genetic recombination and DNA repair, while the RuvA-RuvB complex plays an important role in the rescue of blocked DNA replication forks via replication fork reversal (RFR). RuvA specifically binds to HJ cruciform DNA, conferring on it an open structure. The RuvB hexamer acts as an ATP-dependent pump, pulling dsDNA into and through the RuvAB complex. HJ branch migration allows RuvC to scan DNA until it finds its consensus sequence, where it cleaves and resolves the cruciform DNA. The chain is Holliday junction branch migration complex subunit RuvA from Corynebacterium kroppenstedtii (strain DSM 44385 / JCM 11950 / CIP 105744 / CCUG 35717).